The sequence spans 91 residues: Acylphosphatase (91 aa).

In terms of domain architecture, Acylphosphatase-like spans 3–91 (CLRAIVKGKV…ANYSDFRIKH (89 aa)). Residues arginine 18 and asparagine 36 contribute to the active site.

The protein belongs to the acylphosphatase family.

It catalyses the reaction an acyl phosphate + H2O = a carboxylate + phosphate + H(+). This is Acylphosphatase (acyP) from Dehalococcoides mccartyi (strain ATCC BAA-2100 / JCM 16839 / KCTC 5957 / BAV1).